The primary structure comprises 141 residues: Nucleoside diphosphate kinase (141 aa).

Lysine 11, phenylalanine 59, arginine 87, threonine 93, arginine 104, and asparagine 114 together coordinate ATP. The active-site Pros-phosphohistidine intermediate is histidine 117.

This sequence belongs to the NDK family. Homotetramer. Mg(2+) serves as cofactor.

It localises to the cytoplasm. The enzyme catalyses a 2'-deoxyribonucleoside 5'-diphosphate + ATP = a 2'-deoxyribonucleoside 5'-triphosphate + ADP. The catalysed reaction is a ribonucleoside 5'-diphosphate + ATP = a ribonucleoside 5'-triphosphate + ADP. Major role in the synthesis of nucleoside triphosphates other than ATP. The ATP gamma phosphate is transferred to the NDP beta phosphate via a ping-pong mechanism, using a phosphorylated active-site intermediate. This chain is Nucleoside diphosphate kinase, found in Pseudomonas putida (strain GB-1).